Consider the following 255-residue polypeptide: NAD kinase (255 aa).

Asp-44 functions as the Proton acceptor in the catalytic mechanism. Residues 44–45, His-49, 114–115, Asp-144, Ala-152, 155–160, and Gln-216 contribute to the NAD(+) site; these read DG, NE, and SAYNLS.

Belongs to the NAD kinase family. A divalent metal cation serves as cofactor.

It is found in the cytoplasm. It catalyses the reaction NAD(+) + ATP = ADP + NADP(+) + H(+). Involved in the regulation of the intracellular balance of NAD and NADP, and is a key enzyme in the biosynthesis of NADP. Catalyzes specifically the phosphorylation on 2'-hydroxyl of the adenosine moiety of NAD to yield NADP. In Rickettsia prowazekii (strain Madrid E), this protein is NAD kinase.